We begin with the raw amino-acid sequence, 204 residues long: N-(5'-phosphoribosyl)anthranilate isomerase (204 aa).

Belongs to the TrpF family.

The catalysed reaction is N-(5-phospho-beta-D-ribosyl)anthranilate = 1-(2-carboxyphenylamino)-1-deoxy-D-ribulose 5-phosphate. It functions in the pathway amino-acid biosynthesis; L-tryptophan biosynthesis; L-tryptophan from chorismate: step 3/5. The polypeptide is N-(5'-phosphoribosyl)anthranilate isomerase (Bacillus thuringiensis (strain Al Hakam)).